The sequence spans 54 residues: Large ribosomal subunit protein bL32 (54 aa).

A disordered region spans residues Met1–His26. Residues Lys7–Arg16 show a composition bias toward basic residues.

This sequence belongs to the bacterial ribosomal protein bL32 family.

The polypeptide is Large ribosomal subunit protein bL32 (Buchnera aphidicola subsp. Acyrthosiphon pisum (strain 5A)).